Reading from the N-terminus, the 412-residue chain is Trehalose synthase (412 aa).

This sequence belongs to the glycosyltransferase group 1 family. Glycosyltransferase 4 subfamily. Homodimer. Mg(2+) is required as a cofactor.

The enzyme catalyses an NDP-alpha-D-glucose + D-glucose = alpha,alpha-trehalose + a ribonucleoside 5'-diphosphate + H(+). In terms of biological role, synthesizes trehalose from ADP-glucose and glucose. Has a much lower activity toward UDP-glucose and GDP-glucose. The reaction is reversible, the equilibrium strongly favors trehalose synthesis. The chain is Trehalose synthase from Pyrococcus furiosus (strain ATCC 43587 / DSM 3638 / JCM 8422 / Vc1).